The following is a 465-amino-acid chain: Argininosuccinate lyase (465 aa).

It belongs to the lyase 1 family. Argininosuccinate lyase subfamily.

The protein localises to the cytoplasm. It catalyses the reaction 2-(N(omega)-L-arginino)succinate = fumarate + L-arginine. It functions in the pathway amino-acid biosynthesis; L-arginine biosynthesis; L-arginine from L-ornithine and carbamoyl phosphate: step 3/3. This is Argininosuccinate lyase from Rhodopseudomonas palustris (strain HaA2).